Consider the following 85-residue polypeptide: Protein Vpu (85 aa).

Residues 1 to 7 (MHQENLL) are Extracellular-facing. A helical transmembrane segment spans residues 8 to 28 (ALIALSALCLINVLIWLFNLR). Over 29–85 (IYLVQRKQDRREQEILERLRRIKEIRDDSDYESNEEEQQEVMELIHSHGFANPMFEL) the chain is Cytoplasmic.

It belongs to the HIV-1 VPU protein family. Homopentamer. Interacts with host CD4 and BRTC; these interactions induce proteasomal degradation of CD4. Interacts with host BST2; this interaction leads to the degradation of host BST2. Interacts with host FBXW11. Interacts with host AP1M1; this interaction plays a role in the mistrafficking and subsequent degradation of host BST2. Interacts with host RANBP2; this interaction allows Vpu to down-regulate host BLM sumoylation. Post-translationally, phosphorylated by host CK2. This phosphorylation is necessary for interaction with human BTRC and degradation of CD4.

The protein localises to the host membrane. Ion channel activity is inhibited by hexamethylene amiloride in vitro. Enhances virion budding by targeting host CD4 and Tetherin/BST2 to proteasome degradation. Degradation of CD4 prevents any unwanted premature interactions between viral Env and its host receptor CD4 in the endoplasmic reticulum. Degradation of antiretroviral protein Tetherin/BST2 is important for virion budding, as BST2 tethers new viral particles to the host cell membrane. Mechanistically, Vpu bridges either CD4 or BST2 to BTRC, a substrate recognition subunit of the Skp1/Cullin/F-box protein E3 ubiquitin ligase, induces their ubiquitination and subsequent proteasomal degradation. The alteration of the E3 ligase specificity by Vpu seems to promote the degradation of host IKBKB, leading to NF-kappa-B down-regulation and subsequent apoptosis. Acts as a viroporin that forms an oligomeric ion channel in membranes. Modulates the host DNA repair mechanisms to promote degradation of nuclear viral cDNA in cells that are already productively infected in order to suppress immune sensing and proviral hyper-integration (superinfection). Manipulates PML-NBs and modulates SUMOylation of host BLM protein thereby enhancing its DNA-end processing activity toward viral unintegrated linear DNA. Also inhibits RAD52-mediated homologous repair of viral cDNA, preventing the generation of dead-end circular forms of single copies of the long terminal repeat and permitting sustained nucleolytic attack. This Human immunodeficiency virus type 1 group O (isolate MVP5180) (HIV-1) protein is Protein Vpu.